We begin with the raw amino-acid sequence, 1527 residues long: DNA (cytosine-5)-methyltransferase 1A (1527 aa).

Disordered stretches follow at residues 1 to 62 and 661 to 718; these read MAKS…PKRA and GDTK…KEIK. Acidic residues-rich tracts occupy residues 25–36 and 664–692; these read EPVENENLESEF and KEEDQNEPKEIDDDQEENEDNDAEEEVNV. The span at 709–718 shows a compositional bias: basic and acidic residues; that stretch reads SSADTRKEIK. 2 BAH domains span residues 742 to 874 and 910 to 1049; these read LSIS…FSLP and ITYN…KQLP. The SAM-dependent MTase C5-type domain occupies 1092–1526; that stretch reads LATLDIFAGC…RKLKQAIDAK (435 aa). The active site involves Cys1197.

Belongs to the class I-like SAM-binding methyltransferase superfamily. C5-methyltransferase family. Expressed in roots and inflorescences. Expressed in roots, panicles, anthers, pistils, endosperm and imbibed embryos. Expressed in tissues containing actively replicating and dividing cells, such as shoot and root meristems.

It localises to the nucleus. The enzyme catalyses a 2'-deoxycytidine in DNA + S-adenosyl-L-methionine = a 5-methyl-2'-deoxycytidine in DNA + S-adenosyl-L-homocysteine + H(+). Its function is as follows. Probably methylates CpG residues and maintains DNA methylation. May be involved in methylation-dependent gene silencing. May play a minor role in the maintenance of DNA methylation. This Oryza sativa subsp. japonica (Rice) protein is DNA (cytosine-5)-methyltransferase 1A.